The primary structure comprises 217 residues: MSAAGAIAAASVGRLRTGVRRPFSEYGRGLIIRCHSSGMTLDNINRAAVDRIIRVDHAGEYGANRIYAGQMAVLGRTSVGPVIQKMWDQEKNHLKKFNELMIAFRVRPTVLMPLWNVAGFALGAGTALLGKEGAMACTVAVEESIANHYNNQIRMLMEEDPEKYEELLQVIKQFRDEELEHHDTGLDHDAELAPAYALLKRIIQAGCSAAIYLSERF.

The transit peptide at 1–23 (MSAAGAIAAASVGRLRTGVRRPF) directs the protein to the mitochondrion. 2 repeat units span residues 48–129 (AVDR…TALL) and 130–217 (GKEG…SERF). Residues 48 to 217 (AVDRIIRVDH…SAAIYLSERF (170 aa)) form a 2 X approximate tandem repeats region. Arginine 51 contacts NADH. 6 residues coordinate Fe cation: glutamate 60, glutamate 90, histidine 93, glutamate 142, glutamate 178, and histidine 181. NADH contacts are provided by tyrosine 212 and arginine 216.

It belongs to the COQ7 family. In terms of assembly, component of a multi-subunit COQ enzyme complex. Interacts with COQ8B and COQ6. Interacts with COQ9. The cofactor is Fe cation. Highly expressed in tissues with high energy demand such as heart, muscle, liver, and kidney.

It localises to the mitochondrion inner membrane. It carries out the reaction a 5-methoxy-2-methyl-3-(all-trans-polyprenyl)benzoquinone + NADH + O2 = a 3-demethylubiquinone + NAD(+) + H2O. Its pathway is cofactor biosynthesis; ubiquinone biosynthesis. Functionally, catalyzes the hydroxylation of the 5-methoxy-2-methyl-3-(all-trans-polyprenyl)benzoquinone at the C6 position and participates in the biosynthesis of ubiquinone. Catalyzes the reaction through a substrate-mediated reduction pathway, whereby NADH shuttles electrons to 5-methoxy-2-methyl-3-(all-trans-decaprenyl)benzoquinone, which then transfers the electrons to the two Fe(3+) centers. The binding of 5-methoxy-2-methyl-3-(all-trans-polyprenyl)benzoquinone (DMQn) mediates reduction of the diiron center by nicotinamide adenine dinucleotide (NADH) and initiates oxygen activation for subsequent DMQ hydroxylation. The physiological substrates are 5-methoxy-2-methyl-3-(all-trans-nonaprenyl)benzoquinone (DMQ(9)) and 5-methoxy-2-methyl-3-(all-trans-decaprenyl)benzoquinone (DMQ(10)), however in vitro the enzyme does not have any specificity concerning the length of the polyprenyl tail, and accepts tails of various lengths with similar efficiency. Also has a structural role in the COQ enzyme complex, stabilizing other COQ polypeptides. Involved in lifespan determination in a ubiquinone-independent manner. Plays a role in modulating mitochondrial stress responses, acting in the nucleus, perhaps via regulating gene expression, independent of its characterized mitochondrial function in ubiquinone biosynthesis. The protein is NADPH-dependent 3-demethoxyubiquinone 3-hydroxylase, mitochondrial of Mus musculus (Mouse).